We begin with the raw amino-acid sequence, 316 residues long: Ornithine carbamoyltransferase (316 aa).

Residues 57–60 (STRT), Q84, R108, and 135–138 (HPCQ) contribute to the carbamoyl phosphate site. L-ornithine contacts are provided by residues N166, D230, and 234-235 (SM). Carbamoyl phosphate-binding positions include 269 to 270 (CL) and R297.

The protein belongs to the aspartate/ornithine carbamoyltransferase superfamily. OTCase family.

The protein resides in the cytoplasm. It catalyses the reaction carbamoyl phosphate + L-ornithine = L-citrulline + phosphate + H(+). The protein operates within amino-acid biosynthesis; L-arginine biosynthesis; L-arginine from L-ornithine and carbamoyl phosphate: step 1/3. Functionally, reversibly catalyzes the transfer of the carbamoyl group from carbamoyl phosphate (CP) to the N(epsilon) atom of ornithine (ORN) to produce L-citrulline. This is Ornithine carbamoyltransferase (argF) from Bacillus cereus (strain ATCC 14579 / DSM 31 / CCUG 7414 / JCM 2152 / NBRC 15305 / NCIMB 9373 / NCTC 2599 / NRRL B-3711).